Consider the following 123-residue polypeptide: Large ribosomal subunit protein bL17 (123 aa).

Belongs to the bacterial ribosomal protein bL17 family. As to quaternary structure, part of the 50S ribosomal subunit. Contacts protein L32.

The sequence is that of Large ribosomal subunit protein bL17 from Dichelobacter nodosus (strain VCS1703A).